A 162-amino-acid chain; its full sequence is Phosphopantetheine adenylyltransferase (162 aa).

Ser-11 provides a ligand contact to substrate. ATP contacts are provided by residues 11-12 and His-19; that span reads SF. Substrate is bound by residues Lys-43, Val-76, and Arg-90. ATP is bound by residues 91–93, Glu-101, and 126–132; these read GLR and HLYISSS.

This sequence belongs to the bacterial CoaD family. Homohexamer. The cofactor is Mg(2+).

It is found in the cytoplasm. The enzyme catalyses (R)-4'-phosphopantetheine + ATP + H(+) = 3'-dephospho-CoA + diphosphate. It functions in the pathway cofactor biosynthesis; coenzyme A biosynthesis; CoA from (R)-pantothenate: step 4/5. Reversibly transfers an adenylyl group from ATP to 4'-phosphopantetheine, yielding dephospho-CoA (dPCoA) and pyrophosphate. The protein is Phosphopantetheine adenylyltransferase of Streptococcus pneumoniae (strain Hungary19A-6).